The sequence spans 195 residues: Imidazoleglycerol-phosphate dehydratase (195 aa).

Belongs to the imidazoleglycerol-phosphate dehydratase family.

It is found in the cytoplasm. It catalyses the reaction D-erythro-1-(imidazol-4-yl)glycerol 3-phosphate = 3-(imidazol-4-yl)-2-oxopropyl phosphate + H2O. It functions in the pathway amino-acid biosynthesis; L-histidine biosynthesis; L-histidine from 5-phospho-alpha-D-ribose 1-diphosphate: step 6/9. In Campylobacter curvus (strain 525.92), this protein is Imidazoleglycerol-phosphate dehydratase.